A 505-amino-acid chain; its full sequence is Peroxisome proliferator-activated receptor gamma (505 aa).

Positions 1-26 (MGETLGDSLIDPESDSFADTLSASTS) are disordered. Over residues 17–26 (FADTLSASTS) the composition is skewed to polar residues. Phosphoserine; by MAPK is present on serine 112. The segment at residues 136 to 210 (AIECRVCGDK…VGMSHNAIRF (75 aa)) is a DNA-binding region (nuclear receptor). 2 consecutive NR C4-type zinc fingers follow at residues 139-159 (CRVC…CEGC) and 176-198 (CDLN…FQKC). The interaction with FAM120B stretch occupies residues 205–280 (HNAIRFGRMP…DKSPFVIYDM (76 aa)). One can recognise an NR LBD domain in the interval 238 to 503 (DLRALAKHLY…HPLLQEIYKD (266 aa)). Residue lysine 252 forms a Glycyl lysine isopeptide (Lys-Gly) (interchain with G-Cter in ubiquitin) linkage. Positions 495–503 (PLLQEIYKD) match the 9aaTAD motif.

Belongs to the nuclear hormone receptor family. NR1 subfamily. Interacts with FOXO1 (acetylated form). Heterodimer with other nuclear receptors, such as RXRA. The heterodimer with the retinoic acid receptor RXRA is called adipocyte-specific transcription factor ARF6. Interacts with NCOA6 coactivator, leading to a strong increase in transcription of target genes. Interacts with coactivator PPARBP, leading to a mild increase in transcription of target genes. Interacts with NOCA7 in a ligand-inducible manner. Interacts with NCOA1 and NCOA2 LXXLL motifs. Interacts with ASXL1, ASXL2, DNTTIP2, FAM120B, MAP2K1/MEK1, NR0B2, PDPK1, PRDM16, PRMT2 and TGFB1I1. Interacts (when activated by agonist) with PPP5C. Interacts with HELZ2 and THRAP3; the interaction stimulates the transcriptional activity of PPARG. Interacts with PER2, the interaction is ligand dependent and blocks PPARG recruitment to target promoters. Interacts with NOCT. Interacts with ACTN4. Interacts (when in the liganded conformation) with GPS2. Interacts with CRY1 and CRY2 in a ligand-dependent manner. In the absence of hormonal ligand, interacts with TACC1. In macrophages, interacts with PAQR3 and STUB1; the interactions promote PPARG poylubiquitination and STUB1-mediated degradation. In terms of processing, phosphorylated at basal conditions and dephosphorylated when treated with the ligand. May be dephosphorylated by PPP5C. The phosphorylated form may be inactive and dephosphorylation induces adipogenic activity. Post-translationally, ubiquitinated by E3 ubiquitin-protein ligase complex containing FBXO9; leading to proteasomal degradation. Ubiquitinated at Lys-252 by TRIM55 leading to proteasomal degradation. Ubiquitinated by E3 ubiquitin-protein ligase STUB1/CHIP; leading to proteasomal degradation.

It localises to the nucleus. The protein localises to the cytoplasm. With respect to regulation, PDPK1 activates its transcriptional activity independently of its kinase activity. In terms of biological role, nuclear receptor that binds peroxisome proliferators such as hypolipidemic drugs and fatty acids. Once activated by a ligand, the nuclear receptor binds to DNA specific PPAR response elements (PPRE) and modulates the transcription of its target genes, such as acyl-CoA oxidase. It therefore controls the peroxisomal beta-oxidation pathway of fatty acids. Key regulator of adipocyte differentiation and glucose homeostasis. ARF6 acts as a key regulator of the tissue-specific adipocyte P2 (aP2) enhancer. Acts as a critical regulator of gut homeostasis by suppressing NF-kappa-B-mediated pro-inflammatory responses. Plays a role in the regulation of cardiovascular circadian rhythms by regulating the transcription of BMAL1 in the blood vessels. This chain is Peroxisome proliferator-activated receptor gamma (PPARG), found in Canis lupus familiaris (Dog).